The sequence spans 223 residues: Thiamine-phosphate synthase (223 aa).

4-amino-2-methyl-5-(diphosphooxymethyl)pyrimidine contacts are provided by residues glutamine 47–lysine 51 and asparagine 84. Residues aspartate 85 and aspartate 104 each contribute to the Mg(2+) site. Serine 123 contributes to the 4-amino-2-methyl-5-(diphosphooxymethyl)pyrimidine binding site. Residue threonine 150–threonine 152 coordinates 2-[(2R,5Z)-2-carboxy-4-methylthiazol-5(2H)-ylidene]ethyl phosphate. A 4-amino-2-methyl-5-(diphosphooxymethyl)pyrimidine-binding site is contributed by lysine 153. Residue glycine 182 coordinates 2-[(2R,5Z)-2-carboxy-4-methylthiazol-5(2H)-ylidene]ethyl phosphate.

The protein belongs to the thiamine-phosphate synthase family. Mg(2+) serves as cofactor.

It carries out the reaction 2-[(2R,5Z)-2-carboxy-4-methylthiazol-5(2H)-ylidene]ethyl phosphate + 4-amino-2-methyl-5-(diphosphooxymethyl)pyrimidine + 2 H(+) = thiamine phosphate + CO2 + diphosphate. The enzyme catalyses 2-(2-carboxy-4-methylthiazol-5-yl)ethyl phosphate + 4-amino-2-methyl-5-(diphosphooxymethyl)pyrimidine + 2 H(+) = thiamine phosphate + CO2 + diphosphate. The catalysed reaction is 4-methyl-5-(2-phosphooxyethyl)-thiazole + 4-amino-2-methyl-5-(diphosphooxymethyl)pyrimidine + H(+) = thiamine phosphate + diphosphate. It participates in cofactor biosynthesis; thiamine diphosphate biosynthesis; thiamine phosphate from 4-amino-2-methyl-5-diphosphomethylpyrimidine and 4-methyl-5-(2-phosphoethyl)-thiazole: step 1/1. In terms of biological role, condenses 4-methyl-5-(beta-hydroxyethyl)thiazole monophosphate (THZ-P) and 2-methyl-4-amino-5-hydroxymethyl pyrimidine pyrophosphate (HMP-PP) to form thiamine monophosphate (TMP). This is Thiamine-phosphate synthase from Saccharopolyspora erythraea (strain ATCC 11635 / DSM 40517 / JCM 4748 / NBRC 13426 / NCIMB 8594 / NRRL 2338).